The sequence spans 528 residues: Probable feruloyl esterase B-1 (528 aa).

The N-terminal stretch at 1 to 19 (MMWWFLLIGLASAAATASS) is a signal peptide. Intrachain disulfides connect cysteine 29–cysteine 78, cysteine 64–cysteine 117, cysteine 190–cysteine 445, cysteine 259–cysteine 276, cysteine 285–cysteine 295, and cysteine 505–cysteine 527. Asparagine 83 and asparagine 101 each carry an N-linked (GlcNAc...) asparagine glycan. Serine 191 functions as the Acyl-ester intermediate in the catalytic mechanism. Positions 260, 263, 265, 267, and 269 each coordinate Ca(2+). N-linked (GlcNAc...) asparagine glycans are attached at residues asparagine 286, asparagine 354, and asparagine 385. Residues aspartate 404 and histidine 444 each act as charge relay system in the active site.

It belongs to the tannase family.

The protein resides in the secreted. It carries out the reaction feruloyl-polysaccharide + H2O = ferulate + polysaccharide.. Its function is as follows. Involved in degradation of plant cell walls. Hydrolyzes the feruloyl-arabinose ester bond in arabinoxylans as well as the feruloyl-galactose and feruloyl-arabinose ester bonds in pectin. The polypeptide is Probable feruloyl esterase B-1 (faeB-1) (Aspergillus fumigatus (strain CBS 144.89 / FGSC A1163 / CEA10) (Neosartorya fumigata)).